The sequence spans 366 residues: Chorismate synthase (366 aa).

NADP(+)-binding residues include R48 and R54. Residues 132-134, 244-245, G289, 304-308, and R330 contribute to the FMN site; these read RSS, NA, and KPTSS.

This sequence belongs to the chorismate synthase family. In terms of assembly, homotetramer. The cofactor is FMNH2.

The enzyme catalyses 5-O-(1-carboxyvinyl)-3-phosphoshikimate = chorismate + phosphate. It functions in the pathway metabolic intermediate biosynthesis; chorismate biosynthesis; chorismate from D-erythrose 4-phosphate and phosphoenolpyruvate: step 7/7. Its function is as follows. Catalyzes the anti-1,4-elimination of the C-3 phosphate and the C-6 proR hydrogen from 5-enolpyruvylshikimate-3-phosphate (EPSP) to yield chorismate, which is the branch point compound that serves as the starting substrate for the three terminal pathways of aromatic amino acid biosynthesis. This reaction introduces a second double bond into the aromatic ring system. The sequence is that of Chorismate synthase from Methylorubrum populi (strain ATCC BAA-705 / NCIMB 13946 / BJ001) (Methylobacterium populi).